The chain runs to 227 residues: Deoxyribose-phosphate aldolase (227 aa).

Asp84 (proton donor/acceptor) is an active-site residue. The Schiff-base intermediate with acetaldehyde role is filled by Lys146. Catalysis depends on Lys188, which acts as the Proton donor/acceptor.

It belongs to the DeoC/FbaB aldolase family. DeoC type 1 subfamily.

The protein resides in the cytoplasm. It catalyses the reaction 2-deoxy-D-ribose 5-phosphate = D-glyceraldehyde 3-phosphate + acetaldehyde. It participates in carbohydrate degradation; 2-deoxy-D-ribose 1-phosphate degradation; D-glyceraldehyde 3-phosphate and acetaldehyde from 2-deoxy-alpha-D-ribose 1-phosphate: step 2/2. Its function is as follows. Catalyzes a reversible aldol reaction between acetaldehyde and D-glyceraldehyde 3-phosphate to generate 2-deoxy-D-ribose 5-phosphate. The polypeptide is Deoxyribose-phosphate aldolase (Pyrobaculum islandicum (strain DSM 4184 / JCM 9189 / GEO3)).